A 196-amino-acid polypeptide reads, in one-letter code: Nucleoid occlusion factor SlmA (196 aa).

Residues 7 to 68 enclose the HTH tetR-type domain; the sequence is SNRREEILQA…GLIEFIEEAL (62 aa). Positions 31-50 form a DNA-binding region, H-T-H motif; that stretch reads TTAKLAQQVGVSEAALYRHF. Residues 65-142 are a coiled coil; it reads EEALMSRINR…QLRQILRERK (78 aa).

This sequence belongs to the nucleoid occlusion factor SlmA family. Homodimer. Interacts with FtsZ.

The protein resides in the cytoplasm. Its subcellular location is the nucleoid. In terms of biological role, required for nucleoid occlusion (NO) phenomenon, which prevents Z-ring formation and cell division over the nucleoid. Acts as a DNA-associated cell division inhibitor that binds simultaneously chromosomal DNA and FtsZ, and disrupts the assembly of FtsZ polymers. SlmA-DNA-binding sequences (SBS) are dispersed on non-Ter regions of the chromosome, preventing FtsZ polymerization at these regions. This is Nucleoid occlusion factor SlmA from Vibrio vulnificus (strain CMCP6).